We begin with the raw amino-acid sequence, 80 residues long: Clavanin-A (80 aa).

The signal sequence occupies residues 1 to 19 (MKTTILILLILGLGINAKS). A propeptide spanning residues 20-29 (LEERKSEEEK) is cleaved from the precursor. F52 is modified (phenylalanine amide). The propeptide occupies 54 to 80 (DDQQDNGKFYGHYAEDNGKHWYDTGDQ).

The protein localises to the secreted. In terms of biological role, has antimicrobial activity. This chain is Clavanin-A, found in Styela clava (Sea squirt).